The sequence spans 837 residues: Tuftelin-interacting protein 11 (837 aa).

A compositionally biased stretch (basic and acidic residues) spans 1 to 13; sequence MSLSHLYRDGEGH. Disordered stretches follow at residues 1 to 31, 54 to 73, and 85 to 136; these read MSLSHLYRDGEGHMDDDEDERENFEITDWDL, WAERDSDEERPSFGGKRARD, and LKKG…AGGT. Positions 1–50 are required for interaction with DHX15; that stretch reads MSLSHLYRDGEGHMDDDEDERENFEITDWDLQNEFNPNRQRHWQTKEEAT. At S2 the chain carries Phosphoserine. A compositionally biased stretch (acidic residues) spans 14–28; it reads MDDDEDERENFEITD. Residues 54 to 64 show a composition bias toward basic and acidic residues; the sequence is WAERDSDEERP. Phosphoserine is present on residues S59 and S98. The segment covering 91-102 has biased composition (acidic residues); it reads EEAELEDSDDEE. A compositionally biased stretch (basic and acidic residues) spans 103–116; that stretch reads KPVKQDEFPKDFGP. Phosphoserine is present on S144. A G-patch domain is found at 149-195; that stretch reads TKGIGQKLLQKMGYVPGRGLGKNAQGIINPIEAKQRKGKGAVGAYGS. Disordered regions lie at residues 183–236 and 287–313; these read QRKG…KKKP and HKHSVPDDGLPPQAQPPPPPGKEARAP. Residue S210 is modified to Phosphoserine. Over residues 217-231 the composition is skewed to basic and acidic residues; sequence EFQKELSQWRKDPSG. The Nuclear localization signal signature appears at 700–705; that stretch reads VKDKFN. Residues 710 to 734 form a required for nuclear speckle localization region; that stretch reads IMNRAVSSNVGAYMQPGAREHIAYL.

Belongs to the TFP11/STIP family. In terms of assembly, identified in the spliceosome C complex. Found in the Intron Large (IL) complex, a post-mRNA release spliceosomal complex containing the excised intron, U2, U5 and U6 snRNPs, and splicing factors. Interacts with TUFT1. Interacts with DHX15; indicative for a recruitment of DHX15 to the IL complex. Interacts with GCFC2.

It is found in the cytoplasm. Its subcellular location is the nucleus. In terms of biological role, involved in pre-mRNA splicing, specifically in spliceosome disassembly during late-stage splicing events. Intron turnover seems to proceed through reactions in two lariat-intron associated complexes termed Intron Large (IL) and Intron Small (IS). In cooperation with DHX15 seems to mediate the transition of the U2, U5 and U6 snRNP-containing IL complex to the snRNP-free IS complex leading to efficient debranching and turnover of excised introns. May play a role in the differentiation of ameloblasts and odontoblasts or in the forming of the enamel extracellular matrix. The protein is Tuftelin-interacting protein 11 (TFIP11) of Bos taurus (Bovine).